A 61-amino-acid chain; its full sequence is Large ribosomal subunit protein bL33 (61 aa).

This sequence belongs to the bacterial ribosomal protein bL33 family.

In Amoebophilus asiaticus (strain 5a2), this protein is Large ribosomal subunit protein bL33.